Consider the following 1073-residue polypeptide: Self-sufficient cytochrome P450 monooxygenase CYP505AG1 (1073 aa).

A heme-binding site is contributed by Cys409. The Flavodoxin-like domain maps to 501–644 (VTILYGSNSG…DLENWEDEHL (144 aa)). FMN is bound by residues 507 to 511 (SNSGT) and 588 to 620 (VFAC…HRVA). An FAD-binding FR-type domain is found at 680–909 (HNAVECIVSE…RPCKKQFHLP (230 aa)).

The protein in the N-terminal section; belongs to the cytochrome P450 family. FAD is required as a cofactor. It depends on FMN as a cofactor. Requires heme as cofactor.

It carries out the reaction 2 oxidized [cytochrome P450] + NADPH = 2 reduced [cytochrome P450] + NADP(+) + H(+). The catalysed reaction is an organic molecule + reduced [NADPH--hemoprotein reductase] + O2 = an alcohol + oxidized [NADPH--hemoprotein reductase] + H2O + H(+). It catalyses the reaction dodecanoate + reduced [NADPH--hemoprotein reductase] + O2 = 10-hydroxydodecanoate + oxidized [NADPH--hemoprotein reductase] + H2O + H(+). The enzyme catalyses tetradecanoate + reduced [NADPH--hemoprotein reductase] + O2 = 12-hydroxytetradecanoate + oxidized [NADPH--hemoprotein reductase] + H2O + H(+). Functionally, self-sufficient cytochrome P450 monooxygenase that catalyzes the regioselective in-chain hydroxylation of alkanes, fatty alcohols, and fatty acids, giving sub-terminal hydroxylation by acting preferentially on the omega-2 position. Prefers fatty acids as substrates, since it hydroxylates the small amounts of dodecanoic acid formed in the presence of an excess of 1-dodecanol. This Oidiodendron maius (strain Zn) protein is Self-sufficient cytochrome P450 monooxygenase CYP505AG1.